A 77-amino-acid polypeptide reads, in one-letter code: Acyl carrier protein (77 aa).

Residues 2–77 (SSIDKRIKEI…DAIDYITDHT (76 aa)) enclose the Carrier domain. O-(pantetheine 4'-phosphoryl)serine is present on serine 37.

It belongs to the acyl carrier protein (ACP) family. In terms of processing, 4'-phosphopantetheine is transferred from CoA to a specific serine of apo-ACP by AcpS. This modification is essential for activity because fatty acids are bound in thioester linkage to the sulfhydryl of the prosthetic group.

Its subcellular location is the cytoplasm. The protein operates within lipid metabolism; fatty acid biosynthesis. Carrier of the growing fatty acid chain in fatty acid biosynthesis. The sequence is that of Acyl carrier protein from Geotalea uraniireducens (strain Rf4) (Geobacter uraniireducens).